We begin with the raw amino-acid sequence, 304 residues long: Foldase protein PrsA (304 aa).

Positions 1 to 19 (MKKKLLSVAAVASVFTLAA) are cleaved as a signal peptide. A lipid anchor (N-palmitoyl cysteine) is attached at Cys-20. Cys-20 is lipidated: S-diacylglycerol cysteine. The region spanning 140-231 (KVEVKASHIL…FGYHIIKVTD (92 aa)) is the PpiC domain. The disordered stretch occupies residues 285–304 (FDLDKQEQQQMQQQMQQQQQ). The span at 292 to 304 (QQQMQQQMQQQQQ) shows a compositional bias: low complexity.

Belongs to the PrsA family.

It localises to the cell membrane. It catalyses the reaction [protein]-peptidylproline (omega=180) = [protein]-peptidylproline (omega=0). Functionally, plays a major role in protein secretion by helping the post-translocational extracellular folding of several secreted proteins. The sequence is that of Foldase protein PrsA from Exiguobacterium sibiricum (strain DSM 17290 / CCUG 55495 / CIP 109462 / JCM 13490 / 255-15).